The following is a 4691-amino-acid chain: Plectin (4691 aa).

Residues 1–1478 (MVAGMLMPLD…SELTTLTSQY (1478 aa)) form a globular 1 region. Arginine 21 is modified (phosphoserine). Residue valine 26 is modified to Phosphotyrosine. 2 disordered regions span residues 113–161 (RSPH…TPVV) and 167–186 (GTLARPGPEPAPATDERDRV). Basic and acidic residues predominate over residues 137 to 154 (DPAREERQVYRRKEREEG). The interval 181–411 (DERDRVQKKT…YVSSLYDAMP (231 aa)) is actin-binding. Calponin-homology (CH) domains are found at residues 185-293 (RVQK…LHFQ) and 306-411 (MTAK…DAMP). The Spectrin 1 repeat unit spans residues 653–727 (LQSTQRRPEL…ERARNDESQL (75 aa)). Position 728 is a phosphoserine (serine 728). 2 Spectrin repeats span residues 748 to 832 (KLLN…REDH) and 845 to 938 (LQTQ…AIVQ). Threonine 823 is subject to Phosphothreonine. In terms of domain architecture, SH3 spans 949-1006 (RGHVPLIAVCDYKQVEVTVHKGDQCQLVGPAQPSHWKVLSGSSSEAAVPSVCFLVPPP). The segment at 963-4572 (VEVTVHKGDQ…ARTAQKLRDV (3610 aa)) is required for interaction with intermediate filament proteins. Serine 1055 bears the Phosphoserine mark. Residues 1323 to 1423 (RERVTQLLER…QKFAKQYINA (101 aa)) form a Spectrin 4 repeat. Serine 1443 carries the phosphoserine modification. Coiled-coil stretches lie at residues 1477 to 1697 (QYIK…ERRL) and 1729 to 2764 (SFAE…TTQA). Residues 1479–2762 (IKFISETLRR…ALAHSEIATT (1284 aa)) are central fibrous rod domain. Residues 1626–1653 (RAEEAEAQKRQAQEEAERLRRQVQDESQ) form a disordered region. Serine 1729 is modified (phosphoserine). The residue at position 1733 (lysine 1733) is an N6-acetyllysine. Disordered regions lie at residues 1801 to 1835 (SLAQADAEKQKEEAEREARRRGKAEEQAVRQRELA), 2100 to 2141 (AEDT…SLAA), and 2223 to 2317 (RLRS…KHKK). Composition is skewed to basic and acidic residues over residues 1806-1835 (DAEKQKEEAEREARRRGKAEEQAVRQRELA), 2100-2116 (AEDTMRSKEQAELEAAR), 2124-2136 (EEQRRREAEERVQ), and 2223-2266 (RLRS…KQSA). Residues 2267 to 2280 (EEQAQAQAQAQAAA) show a composition bias toward low complexity. Over residues 2281–2296 (EKLRKEAEQEAARRAQ) the composition is skewed to basic and acidic residues. Phosphoserine is present on serine 2639. Lysine 2644 bears the N6-acetyllysine mark. A disordered region spans residues 2675–2728 (LREEQQRQQQQMEQEKQELMASMEEARRRQREAEEGVRRKQEELQHLEQQRQQQ). The segment covering 2687 to 2728 (EQEKQELMASMEEARRRQREAEEGVRRKQEELQHLEQQRQQQ) has biased composition (basic and acidic residues). Positions 2763-4691 (QAASTKALPN…SLGGPESAVA (1929 aa)) are globular 2. Serine 2781 bears the Phosphoserine mark. Position 2788 is a phosphotyrosine (tyrosine 2788). Plectin repeat units lie at residues 2795-2832 (QKVPAQQLQEAGILSQEELQRLAQGHTTVAELTQREDV), 2833-2870 (YRYLKGRSSIAGLLLKPTNEKLSVYTALQRQLLSPGTA), 2871-2908 (LILLEAQAASGFLLDPVRNRRLTVNEAVKEGVVGPELH), 2909-2946 (HKLLSAERAVTGYKDPYTGEQISLFQAMKKDLIVRDHG), 2947-2984 (VRLLEAQIATGGIIDPVHSHRVPVDVAYKRGYFDEEMN), and 2988-3022 (SDPSDDTKGFFDPNTHENLTYLQLLERCVEDPETG). Residue serine 2809 is modified to Phosphoserine. Threonine 2893 bears the Phosphothreonine mark. Residue tyrosine 3040 is modified to Phosphotyrosine. Residues lysine 3060 and lysine 3098 each carry the N6-acetyllysine modification. 6 Plectin repeats span residues 3123–3160 (ALVPAAELLDSGVISHELYQQLQRGERSVREVAEADSV), 3161–3198 (RQALRGTNVIAGVWLEEAGQKLSIYEALKKDLLQPEVA), 3199–3236 (VALLEAQAGTGHIIDPATSARLTVDEAVRAGLVGPELH), 3237–3274 (EKLLSAEKAVTGYRDPYSGQSVSLFQALKKGLIPREQG), 3275–3312 (LRLLDAQLSTGGIVDPSKSHRVPLDVAYARGYLDKETN), and 3315–3350 (LTSPRDDARVYHDPSTQEPVTYSQLQQRCRSDQLTG). Residues 3312 to 3326 (NRALTSPRDDARVYH) are compositionally biased toward basic and acidic residues. The tract at residues 3312 to 3338 (NRALTSPRDDARVYHDPSTQEPVTYSQ) is disordered. The span at 3328–3338 (PSTQEPVTYSQ) shows a compositional bias: polar residues. Tyrosine 3369 bears the Phosphotyrosine mark. Lysine 3427 is subject to N6-acetyllysine. 5 Plectin repeats span residues 3492–3529 (RTLLQGSGCLAGIYLEDSKEKVTIYEAMRRGLLRPSTA), 3530–3567 (TLLLEAQAATGFLVDPVRNQRLYVHEAVKAGVVGPELH), 3568–3605 (EKLLSAEKAVTGYKDPYSGNTISLFQAMKKGLVLRDHA), 3606–3643 (IRLLEAQVATGGIIDPVHSHRLPVDVAYQRGYFDEEMN), and 3647–3681 (ADPSDDTKGFFDPNTHENLTYLQLLERCVEDPETG). At threonine 3792 the chain carries Phosphothreonine. The residue at position 3797 (tyrosine 3797) is a Phosphotyrosine. 5 Plectin repeats span residues 3827–3864 (WRYLYGTGAVAGVYLPGSRQTLTIYQALKKGLLSAEVA), 3865–3902 (RLLLEAQAATGFLLDPVKGERLTVDEAVRKGLVGPELH), 3903–3940 (DRLLSAERAVTGYRDPYTEQTISLFQAMKKELIPAEEA), 3941–3978 (LRLLDAQLATGGIVDPRLGFHLPLEVAYQRGYLNKDTH), and 3982–4015 (SEPSEVRSYVDPSTDERLSYTQLLKRCRRDDPSG). The interval 3954–4291 (VDPRLGFHLP…KRRVVIVDPE (338 aa)) is required for interaction with type2 keratins, DES and VIM. Position 4037 is a phosphothreonine (threonine 4037). Phosphoserine is present on serine 4061. Plectin repeat units follow at residues 4070 to 4107 (QKFLEGTSCIAGVFVDATKERLSVYQAMKKGIIRPGTA), 4108 to 4145 (FELLEAQAATGYVIDPIKGLKLTVEEAVRMGIVGPEFK), 4146 to 4183 (DKLLSAERAVTGYKDPYSGKLISLFQAMKKGLILKDHG), 4184 to 4221 (IRLLEAQIATGGIIDPEESHRLPVEVAYKRGLFDEEMN), 4225 to 4259 (TDPSDDTKGFFDPNTEENLTYLQLMERCITDPQTG), and 4272 to 4312 (RKTS…HQTY). The interval 4257 to 4307 (QTGLCLLPLKEKKRERKTSSKSSVRKRRVVIVDPETGKEMSVYEAYRKGLI) is binding to intermediate filaments. Residues 4387 to 4420 (FRSRSSSVGSSSSYPISSAGPRTQLASWSDPTEE) are disordered. A phosphoserine mark is found at serine 4389, serine 4391, serine 4392, serine 4393, serine 4396, serine 4397, serine 4398, and serine 4399. Low complexity predominate over residues 4389–4404 (SRSSSVGSSSSYPISS). Tyrosine 4400 bears the Phosphotyrosine mark. Phosphoserine occurs at positions 4403 and 4413. Residues 4406-4416 (GPRTQLASWSD) are compositionally biased toward polar residues. Plectin repeat units follow at residues 4415–4452 (SDPTEETGPVAGILDTETLEKVSITEAMHRNLVDNITG), 4453–4490 (QRLLEAQACTGGIIDPSTGERFPVTEAVNKGLVDKIMV), 4491–4528 (DRINLAQKAFCGFEDPRTKTKMSAAQALKKGWLYYEAG), 4529–4566 (QRFLEVQYLTGGLIEPDTPGRVSLDEALQRGTVDARTA), and 4567–4604 (QKLRDVSAYSKYLTCPKTKLKISYKDALDRSMVEEGTG). Threonine 4418 is modified (phosphothreonine). Positions 4503-4572 (FEDPRTKTKM…ARTAQKLRDV (70 aa)) are required for efficient interaction with KRT5 and KRT14 heterodimers. At threonine 4546 the chain carries Phosphothreonine; by CDK1. Phosphoserine occurs at positions 4614 and 4620. Over residues 4618 to 4678 (YYSPYSVSGS…SGYGRRYASG (61 aa)) the composition is skewed to low complexity. The tract at residues 4618–4691 (YYSPYSVSGS…SLGGPESAVA (74 aa)) is disordered. Phosphotyrosine is present on tyrosine 4622. Phosphoserine occurs at positions 4623, 4625, and 4629. Threonine 4630 is modified (phosphothreonine). The interval 4632–4647 (GSRTGSRTGSRAGSRR) is 4 X 4 AA tandem repeats of G-S-R-X. Phosphoserine is present on serine 4633. 2 positions are modified to omega-N-methylarginine: arginine 4634 and arginine 4647. 2 positions are modified to phosphoserine: serine 4649 and serine 4682.

This sequence belongs to the plakin or cytolinker family. Homodimer or homotetramer. Interacts (via actin-binding domain) with SYNE3. Interacts (via calponin-homology (CH) 1 domain) with VIM (via rod region). Interacts (via N-terminus) with DST isoform 2 (via N-terminus). Interacts with FER. Interacts with TOR1A. Interacts with ANK3. Identified in complexes that contain VIM, EZR, AHNAK, BFSP1, BFSP2, ANK2, PLEC, PRX and spectrin. As to quaternary structure, interacts with KRT14, heterodimers consisting of KRT8 and KRT18, heterodimers consisting of KRT5 and KRT14, heterodimers consisting of KRT14 and KRT15, and heterodimers consisting of KRT1 and KRT10. Interacts with DES and VIM. Phosphorylated by CDK1; regulates dissociation from intermediate filaments during mitosis. Isoform PLEC-1A is phosphorylated on Ser-21. Isoform PLEC-1A is phosphorylated on Tyr-26. In terms of tissue distribution, detected in eye lens fiber cells (at protein level). Expressed at high levels in lung, brain, small intestine, muscle, heart and skin with lower levels found in kidney, liver, uterus, spleen and salivary gland.

It is found in the cytoplasm. Its subcellular location is the cytoskeleton. It localises to the cell junction. The protein resides in the hemidesmosome. The protein localises to the cell projection. It is found in the podosome. Its function is as follows. Interlinks intermediate filaments with microtubules and microfilaments and anchors intermediate filaments to desmosomes or hemidesmosomes. May be involved not only in the cross-linking and stabilization of cytoskeletal intermediate filaments network, but also in the regulation of their dynamics. The sequence is that of Plectin (Plec) from Mus musculus (Mouse).